Here is a 761-residue protein sequence, read N- to C-terminus: Membrane protein of ER body-like protein (761 aa).

Disordered stretches follow at residues 1–85 and 120–162; these read MGSA…GEHT and GSES…RSRE. The span at 22 to 31 shows a compositional bias: acidic residues; it reads EVEEDDEQIV. The span at 48–65 shows a compositional bias: low complexity; the sequence is VDSSTITNTSSSSSSSFS. Residues 74–85 show a composition bias toward basic and acidic residues; that stretch reads PDFHSNGDGEHT. Residues 136–154 show a composition bias toward polar residues; it reads TADLNGEQTQLEPENGSTS. Residues 186–206 adopt a coiled-coil conformation; it reads IEEEVDFEDVEYHDVENMMDK. Disordered regions lie at residues 338-374 and 416-448; these read SSSV…TGSA and QTQQ…PSHG. Residues 416–432 show a composition bias toward polar residues; the sequence is QTQQKIDNDDSSTADGN. 5 helical membrane-spanning segments follow: residues 549 to 569, 573 to 593, 640 to 660, 670 to 690, and 702 to 722; these read IVYG…SAAG, SMLN…ILII, VAIL…YFSF, VASV…AKAH, and ILYY…VGNF.

This sequence belongs to the CCC1 family.

It localises to the endoplasmic reticulum membrane. Not essential for the accumulation of ER body components, including PYK10. This Arabidopsis thaliana (Mouse-ear cress) protein is Membrane protein of ER body-like protein (MEBL).